Reading from the N-terminus, the 205-residue chain is Small ribosomal subunit protein uS4 (205 aa).

Residues 25-48 (KTIEARPTPPGQHGAKNTRRKKSD) are disordered. The S4 RNA-binding domain maps to 94–157 (RRLDNVVFRA…TKLPIVVETL (64 aa)).

Belongs to the universal ribosomal protein uS4 family. Part of the 30S ribosomal subunit. Contacts protein S5. The interaction surface between S4 and S5 is involved in control of translational fidelity.

Its function is as follows. One of the primary rRNA binding proteins, it binds directly to 16S rRNA where it nucleates assembly of the body of the 30S subunit. Functionally, with S5 and S12 plays an important role in translational accuracy. The sequence is that of Small ribosomal subunit protein uS4 from Methylobacillus flagellatus (strain ATCC 51484 / DSM 6875 / VKM B-1610 / KT).